Here is a 1597-residue protein sequence, read N- to C-terminus: THO complex subunit 2 (1597 aa).

2 disordered regions span residues 1250–1274 and 1384–1597; these read KSQRLQNDPPKSVASGSAGLNSKDR and EPYP…RYQR. Residues 1419–1430 are compositionally biased toward polar residues; it reads GSSNYRGPSNDR. Basic and acidic residues-rich tracts occupy residues 1458–1490, 1500–1512, 1522–1545, and 1554–1567; these read TYNDRSRALRPTGPDRGDGFDQRDNRLREEYKK, FPEKPFQEGKDSS, YKRDSPSENEEKPNKRFKKDETIR, and RNTRDSGAAHRANE. Polar residues predominate over residues 1568–1582; sequence NQRYNGNRKSNTQAL.

This sequence belongs to the THOC2 family. In terms of assembly, component of the THO complex, which is composed of HPR1, MFT1, THO2 and THP2. Together with SUB2, TEX1 and YRA1, THO forms the transcription/export (TREX) complex. THO associates with DNA and RNA in vitro.

It localises to the nucleus. Its function is as follows. Component the THO subcomplex of the TREX complex, which operates in coupling transcription elongation to mRNA export. The THO complex is recruited to transcribed genes and moves along the gene with the elongating polymerase during transcription. THO is important for stabilizing nascent RNA in the RNA polymerase II elongation complex by preventing formation of DNA:RNA hybrids behind the elongating polymerase. It functions in cotranscriptional formation of an export-competent messenger ribonucleoprotein particle (mRNP) by facilitating the loading of ATP-dependent RNA helicase SUB2 and the mRNA export factor YRA1 along the nascent mRNA. This Saccharomyces cerevisiae (strain ATCC 204508 / S288c) (Baker's yeast) protein is THO complex subunit 2 (THO2).